The primary structure comprises 558 residues: Rhamnogalacturonase B (558 aa).

An N-terminal signal peptide occupies residues 1-21 (MLLDKLSVLSFLGLAPIFAAA). A disulfide bond links cysteine 42 and cysteine 68. N-linked (GlcNAc...) asparagine glycosylation is present at asparagine 145. Aspartate 219 functions as the Proton donor in the catalytic mechanism. A disulfide bridge connects residues cysteine 221 and cysteine 238. N-linked (GlcNAc...) asparagine glycans are attached at residues asparagine 239 and asparagine 254. Residue histidine 294 is part of the active site. A glycan (N-linked (GlcNAc...) asparagine) is linked at asparagine 321. 2 cysteine pairs are disulfide-bonded: cysteine 344-cysteine 350 and cysteine 372-cysteine 381. The span at 503–526 (VGAQEGSTTSAPSFAAPSGAGNSP) shows a compositional bias: low complexity. The disordered stretch occupies residues 503–558 (VGAQEGSTTSAPSFAAPSGAGNSPQGPTGASGFGEKGQQGEQGEQGEQGEQGVCYV).

It belongs to the glycosyl hydrolase 28 family.

It is found in the secreted. The enzyme catalyses Endohydrolysis of alpha-D-GalA-(1-&gt;2)-alpha-L-Rha glycosidic bond in the rhamnogalacturonan I backbone with initial inversion of anomeric configuration releasing oligosaccharides with beta-D-GalA at the reducing end.. Functionally, pectinolytic enzymes consist of four classes of enzymes: pectine lyase, polygalacturonase, pectin methylesterase and rhamnogalacturonase. Hydrolyzes alpha-D-galacturonopyranosyl-(1,2)-alpha-L-rhamnopyranosyl linkages in the backbone of the hairy regions of pectins. The polypeptide is Rhamnogalacturonase B (rhgB) (Aspergillus niger).